The sequence spans 1035 residues: Alpha-mannosidase B (1035 aa).

A signal peptide spans 1–20 (MGKVLILFLFVLLLITFINC). N-linked (GlcNAc...) asparagine glycosylation is found at Asn-19 and Asn-30. 2 residues coordinate Zn(2+): His-47 and Asp-49. Asn-63 carries N-linked (GlcNAc...) asparagine glycosylation. A Zn(2+)-binding site is contributed by Asp-161. Asp-161 serves as the catalytic Nucleophile. 6 N-linked (GlcNAc...) asparagine glycosylation sites follow: Asn-245, Asn-250, Asn-270, Asn-309, Asn-327, and Asn-438. A Zn(2+)-binding site is contributed by His-446. Residues Asn-487, Asn-497, Asn-503, Asn-710, Asn-719, Asn-735, Asn-792, Asn-852, Asn-863, Asn-880, Asn-962, and Asn-993 are each glycosylated (N-linked (GlcNAc...) asparagine).

It belongs to the glycosyl hydrolase 38 family. Zn(2+) is required as a cofactor.

The protein resides in the secreted. It catalyses the reaction Hydrolysis of terminal, non-reducing alpha-D-mannose residues in alpha-D-mannosides.. The chain is Alpha-mannosidase B (manB) from Dictyostelium discoideum (Social amoeba).